A 66-amino-acid chain; its full sequence is DNA-directed RNA polymerase subunit Rpo10 (66 aa).

Zn(2+) is bound by residues Cys-7, Cys-10, Cys-44, and Cys-45.

Belongs to the archaeal Rpo10/eukaryotic RPB10 RNA polymerase subunit family. As to quaternary structure, part of the RNA polymerase complex. It depends on Zn(2+) as a cofactor.

The protein localises to the cytoplasm. It catalyses the reaction RNA(n) + a ribonucleoside 5'-triphosphate = RNA(n+1) + diphosphate. Functionally, DNA-dependent RNA polymerase (RNAP) catalyzes the transcription of DNA into RNA using the four ribonucleoside triphosphates as substrates. The sequence is that of DNA-directed RNA polymerase subunit Rpo10 from Hyperthermus butylicus (strain DSM 5456 / JCM 9403 / PLM1-5).